A 177-amino-acid chain; its full sequence is Large ribosomal subunit protein uL6 (177 aa).

This sequence belongs to the universal ribosomal protein uL6 family. As to quaternary structure, part of the 50S ribosomal subunit.

In terms of biological role, this protein binds to the 23S rRNA, and is important in its secondary structure. It is located near the subunit interface in the base of the L7/L12 stalk, and near the tRNA binding site of the peptidyltransferase center. This chain is Large ribosomal subunit protein uL6, found in Rhodopseudomonas palustris (strain BisA53).